The sequence spans 465 residues: GTPase Der (465 aa).

2 consecutive EngA-type G domains span residues 3–166 (FLVA…LNEY) and 184–358 (IHFS…ACAS). GTP is bound by residues 9–16 (GRANVGKS), 56–60 (DTGGI), 118–121 (NKVD), 190–197 (GRPNVGKS), 237–241 (DTAGV), and 302–305 (NKWD). Positions 359-443 (KKITTADATR…PIVFEFKQSE (85 aa)) constitute a KH-like domain. Positions 446-465 (FADRKNKRSKDEGSKSKKVK) are disordered.

The protein belongs to the TRAFAC class TrmE-Era-EngA-EngB-Septin-like GTPase superfamily. EngA (Der) GTPase family. As to quaternary structure, associates with the 50S ribosomal subunit.

Its function is as follows. GTPase that plays an essential role in the late steps of ribosome biogenesis. The protein is GTPase Der of Francisella tularensis subsp. tularensis (strain FSC 198).